The sequence spans 165 residues: Acireductone dioxygenase (165 aa).

Fe(2+) is bound by residues His-90, His-92, Glu-96, and His-134. His-90, His-92, Glu-96, and His-134 together coordinate Ni(2+).

Belongs to the acireductone dioxygenase (ARD) family. As to quaternary structure, monomer. Fe(2+) is required as a cofactor. Ni(2+) serves as cofactor.

The enzyme catalyses 1,2-dihydroxy-5-(methylsulfanyl)pent-1-en-3-one + O2 = 3-(methylsulfanyl)propanoate + CO + formate + 2 H(+). It catalyses the reaction 1,2-dihydroxy-5-(methylsulfanyl)pent-1-en-3-one + O2 = 4-methylsulfanyl-2-oxobutanoate + formate + 2 H(+). It participates in amino-acid biosynthesis; L-methionine biosynthesis via salvage pathway; L-methionine from S-methyl-5-thio-alpha-D-ribose 1-phosphate: step 5/6. In terms of biological role, catalyzes 2 different reactions between oxygen and the acireductone 1,2-dihydroxy-3-keto-5-methylthiopentene (DHK-MTPene) depending upon the metal bound in the active site. Fe-containing acireductone dioxygenase (Fe-ARD) produces formate and 2-keto-4-methylthiobutyrate (KMTB), the alpha-ketoacid precursor of methionine in the methionine recycle pathway. Ni-containing acireductone dioxygenase (Ni-ARD) produces methylthiopropionate, carbon monoxide and formate, and does not lie on the methionine recycle pathway. In Rhodopseudomonas palustris (strain TIE-1), this protein is Acireductone dioxygenase.